The chain runs to 277 residues: Phosphatidylglycerol--prolipoprotein diacylglyceryl transferase (277 aa).

A run of 3 helical transmembrane segments spans residues 16 to 36 (FFQIHWYGLTYLAAFGLFYFL), 62 to 82 (LLFFGVVGVILGGRLGYVLFY), and 101 to 121 (GMAFHGGLLGVIVAMALFAHL). Arginine 145 contacts a 1,2-diacyl-sn-glycero-3-phospho-(1'-sn-glycerol). The next 2 membrane-spanning stretches (helical) occupy residues 214 to 234 (PIWGRVSGLFVGGYGVFRFIA) and 243 to 263 (FLGLLAFNLSMGQWLCVPMIV).

This sequence belongs to the Lgt family.

It localises to the cell inner membrane. The enzyme catalyses L-cysteinyl-[prolipoprotein] + a 1,2-diacyl-sn-glycero-3-phospho-(1'-sn-glycerol) = an S-1,2-diacyl-sn-glyceryl-L-cysteinyl-[prolipoprotein] + sn-glycerol 1-phosphate + H(+). It participates in protein modification; lipoprotein biosynthesis (diacylglyceryl transfer). In terms of biological role, catalyzes the transfer of the diacylglyceryl group from phosphatidylglycerol to the sulfhydryl group of the N-terminal cysteine of a prolipoprotein, the first step in the formation of mature lipoproteins. The sequence is that of Phosphatidylglycerol--prolipoprotein diacylglyceryl transferase from Leptothrix cholodnii (strain ATCC 51168 / LMG 8142 / SP-6) (Leptothrix discophora (strain SP-6)).